The sequence spans 316 residues: Protease HtpX homolog (316 aa).

Residues 16-36 (LFMALGFTIGGTGGAMIALVV) form a helical membrane-spanning segment. Zn(2+) is bound at residue His130. The active site involves Glu131. Residue His134 participates in Zn(2+) binding. Helical transmembrane passes span 145–165 (MTAT…FFGA) and 174–194 (LATI…QMAI). Residue Glu199 participates in Zn(2+) binding. The disordered stretch occupies residues 285-316 (PNFAALSERRGSVSSVPRTRRRSSALDPNGRG).

It belongs to the peptidase M48B family. Zn(2+) is required as a cofactor.

Its subcellular location is the cell inner membrane. The chain is Protease HtpX homolog from Rhizorhabdus wittichii (strain DSM 6014 / CCUG 31198 / JCM 15750 / NBRC 105917 / EY 4224 / RW1) (Sphingomonas wittichii).